Here is a 315-residue protein sequence, read N- to C-terminus: tRNA pseudouridine synthase B (315 aa).

D47 functions as the Nucleophile in the catalytic mechanism.

It belongs to the pseudouridine synthase TruB family. Type 1 subfamily.

The catalysed reaction is uridine(55) in tRNA = pseudouridine(55) in tRNA. Its function is as follows. Responsible for synthesis of pseudouridine from uracil-55 in the psi GC loop of transfer RNAs. This is tRNA pseudouridine synthase B from Shewanella amazonensis (strain ATCC BAA-1098 / SB2B).